The chain runs to 203 residues: Guanylate kinase (203 aa).

The 179-residue stretch at 3–181 (GTLYIVAAPS…AVAEMCAIFT (179 aa)) folds into the Guanylate kinase-like domain. Residue 10–17 (APSGAGKS) participates in ATP binding.

Belongs to the guanylate kinase family.

The protein localises to the cytoplasm. It carries out the reaction GMP + ATP = GDP + ADP. Essential for recycling GMP and indirectly, cGMP. In Xanthomonas euvesicatoria pv. vesicatoria (strain 85-10) (Xanthomonas campestris pv. vesicatoria), this protein is Guanylate kinase.